We begin with the raw amino-acid sequence, 298 residues long: Probable tRNA(His) guanylyltransferase (298 aa).

Residues Asp-58, Gly-59, and Asp-105 each contribute to the Mg(2+) site. Residues 58 to 63 and 104 to 105 each bind GTP; these read DGRNFH and SD.

Belongs to the tRNA(His) guanylyltransferase family. As to quaternary structure, homotetramer. Interacts with MFN1 and MFN2; functions as a guanyl-nucleotide exchange factor/GEF for MFN2 and also probably MFN1. Mg(2+) serves as cofactor. In terms of tissue distribution, expressed in many tissues.

It localises to the cytoplasm. Its subcellular location is the mitochondrion outer membrane. It carries out the reaction a 5'-end ribonucleotide-tRNA(His) + GTP + ATP + H2O = a 5'-end phospho-guanosine-ribonucleotide-tRNA(His) + AMP + 2 diphosphate + H(+). Functionally, adds a GMP to the 5'-end of tRNA(His) after transcription and RNase P cleavage. This step is essential for proper recognition of the tRNA and for the fidelity of protein synthesis. Also functions as a guanyl-nucleotide exchange factor/GEF for the MFN1 and MFN2 mitofusins thereby regulating mitochondrial fusion. By regulating both mitochondrial dynamics and bioenergetic function, it contributes to cell survival following oxidative stress. The chain is Probable tRNA(His) guanylyltransferase (THG1L) from Homo sapiens (Human).